Reading from the N-terminus, the 350-residue chain is Probable dTDP-glucose 4,6-dehydratase (350 aa).

Residue 7 to 13 (GGAGFIG) participates in NAD(+) binding. T132 lines the substrate pocket. D133 functions as the Proton donor in the catalytic mechanism. Active-site proton acceptor residues include E134 and Y157.

This sequence belongs to the NAD(P)-dependent epimerase/dehydratase family. dTDP-glucose dehydratase subfamily. Requires NAD(+) as cofactor.

It carries out the reaction dTDP-alpha-D-glucose = dTDP-4-dehydro-6-deoxy-alpha-D-glucose + H2O. It functions in the pathway carbohydrate biosynthesis; dTDP-L-rhamnose biosynthesis. This is Probable dTDP-glucose 4,6-dehydratase from Sinorhizobium fredii (strain NBRC 101917 / NGR234).